A 522-amino-acid chain; its full sequence is Probable protein kinase UbiB (522 aa).

The Protein kinase domain occupies serine 119–serine 497. Residues valine 125–valine 133 and lysine 151 contribute to the ATP site. The active-site Proton acceptor is aspartate 286. The chain crosses the membrane as a helical span at residues glutamine 496 to isoleucine 516.

This sequence belongs to the ABC1 family. UbiB subfamily.

It is found in the cell inner membrane. It functions in the pathway cofactor biosynthesis; ubiquinone biosynthesis [regulation]. Functionally, is probably a protein kinase regulator of UbiI activity which is involved in aerobic coenzyme Q (ubiquinone) biosynthesis. The polypeptide is Probable protein kinase UbiB (Paracidovorax citrulli (strain AAC00-1) (Acidovorax citrulli)).